The sequence spans 367 residues: 1-deoxy-D-xylulose 5-phosphate reductoisomerase (367 aa).

T10, G11, S12, I13, G34, K35, N36, and N112 together coordinate NADPH. K113 is a 1-deoxy-D-xylulose 5-phosphate binding site. E114 is a binding site for NADPH. D138 is a Mn(2+) binding site. S139, E140, S164, and H186 together coordinate 1-deoxy-D-xylulose 5-phosphate. Residue E140 participates in Mn(2+) binding. G192 serves as a coordination point for NADPH. S199, N204, K205, and E208 together coordinate 1-deoxy-D-xylulose 5-phosphate. Residue E208 coordinates Mn(2+).

This sequence belongs to the DXR family. It depends on Mg(2+) as a cofactor. Mn(2+) is required as a cofactor.

It carries out the reaction 2-C-methyl-D-erythritol 4-phosphate + NADP(+) = 1-deoxy-D-xylulose 5-phosphate + NADPH + H(+). It functions in the pathway isoprenoid biosynthesis; isopentenyl diphosphate biosynthesis via DXP pathway; isopentenyl diphosphate from 1-deoxy-D-xylulose 5-phosphate: step 1/6. Catalyzes the NADPH-dependent rearrangement and reduction of 1-deoxy-D-xylulose-5-phosphate (DXP) to 2-C-methyl-D-erythritol 4-phosphate (MEP). This is 1-deoxy-D-xylulose 5-phosphate reductoisomerase from Thermus thermophilus (strain ATCC BAA-163 / DSM 7039 / HB27).